Reading from the N-terminus, the 495-residue chain is Transcription termination/antitermination protein NusA (495 aa).

Residues 135–200 (GQIITGIVKK…RGAQLFLSRS (66 aa)) enclose the S1 motif domain. The KH domain occupies 302-370 (HHTMDIAVDS…KNLNVSEKVI (69 aa)). 2 consecutive repeat copies span residues 364 to 414 (NVSE…KNGL) and 439 to 489 (GMNE…RNIC). The segment at 364 to 489 (NVSEKVIKTL…LLIMAARNIC (126 aa)) is 2 X 51 AA approximate repeats.

This sequence belongs to the NusA family. Monomer. Binds directly to the core enzyme of the DNA-dependent RNA polymerase and to nascent RNA.

Its subcellular location is the cytoplasm. Functionally, participates in both transcription termination and antitermination. The sequence is that of Transcription termination/antitermination protein NusA from Buchnera aphidicola subsp. Schizaphis graminum (strain Sg).